Consider the following 220-residue polypeptide: Ribosomal RNA large subunit methyltransferase E (220 aa).

G60, W62, D92, D108, and D133 together coordinate S-adenosyl-L-methionine. K173 (proton acceptor) is an active-site residue. Residues 195–220 (APRKPKASRDKSSETFILGRHLKRPR) are disordered.

This sequence belongs to the class I-like SAM-binding methyltransferase superfamily. RNA methyltransferase RlmE family.

It is found in the cytoplasm. It carries out the reaction uridine(2552) in 23S rRNA + S-adenosyl-L-methionine = 2'-O-methyluridine(2552) in 23S rRNA + S-adenosyl-L-homocysteine + H(+). Functionally, specifically methylates the uridine in position 2552 of 23S rRNA at the 2'-O position of the ribose in the fully assembled 50S ribosomal subunit. This Burkholderia lata (strain ATCC 17760 / DSM 23089 / LMG 22485 / NCIMB 9086 / R18194 / 383) protein is Ribosomal RNA large subunit methyltransferase E.